Consider the following 293-residue polypeptide: Phosphatidylserine decarboxylase proenzyme (293 aa).

Active-site charge relay system; for autoendoproteolytic cleavage activity residues include Asp88, His144, and Ser247. Ser247 acts as the Schiff-base intermediate with substrate; via pyruvic acid; for decarboxylase activity in catalysis. Ser247 is subject to Pyruvic acid (Ser); by autocatalysis.

The protein belongs to the phosphatidylserine decarboxylase family. PSD-B subfamily. Prokaryotic type I sub-subfamily. In terms of assembly, heterodimer of a large membrane-associated beta subunit and a small pyruvoyl-containing alpha subunit. Pyruvate is required as a cofactor. Is synthesized initially as an inactive proenzyme. Formation of the active enzyme involves a self-maturation process in which the active site pyruvoyl group is generated from an internal serine residue via an autocatalytic post-translational modification. Two non-identical subunits are generated from the proenzyme in this reaction, and the pyruvate is formed at the N-terminus of the alpha chain, which is derived from the carboxyl end of the proenzyme. The autoendoproteolytic cleavage occurs by a canonical serine protease mechanism, in which the side chain hydroxyl group of the serine supplies its oxygen atom to form the C-terminus of the beta chain, while the remainder of the serine residue undergoes an oxidative deamination to produce ammonia and the pyruvoyl prosthetic group on the alpha chain. During this reaction, the Ser that is part of the protease active site of the proenzyme becomes the pyruvoyl prosthetic group, which constitutes an essential element of the active site of the mature decarboxylase.

The protein resides in the cell membrane. It carries out the reaction a 1,2-diacyl-sn-glycero-3-phospho-L-serine + H(+) = a 1,2-diacyl-sn-glycero-3-phosphoethanolamine + CO2. It participates in phospholipid metabolism; phosphatidylethanolamine biosynthesis; phosphatidylethanolamine from CDP-diacylglycerol: step 2/2. Catalyzes the formation of phosphatidylethanolamine (PtdEtn) from phosphatidylserine (PtdSer). This Xylella fastidiosa (strain M23) protein is Phosphatidylserine decarboxylase proenzyme.